The primary structure comprises 62 residues: Large ribosomal subunit protein bL28 (62 aa).

It belongs to the bacterial ribosomal protein bL28 family.

The chain is Large ribosomal subunit protein bL28 from Aliarcobacter butzleri (strain RM4018) (Arcobacter butzleri).